A 1399-amino-acid polypeptide reads, in one-letter code: DNA-directed RNA polymerase subunit beta' (1399 aa).

Residues cysteine 70, cysteine 72, cysteine 85, and cysteine 88 each coordinate Zn(2+). 3 residues coordinate Mg(2+): aspartate 460, aspartate 462, and aspartate 464. Residues cysteine 814, cysteine 888, cysteine 895, and cysteine 898 each contribute to the Zn(2+) site.

The protein belongs to the RNA polymerase beta' chain family. In terms of assembly, the RNAP catalytic core consists of 2 alpha, 1 beta, 1 beta' and 1 omega subunit. When a sigma factor is associated with the core the holoenzyme is formed, which can initiate transcription. It depends on Mg(2+) as a cofactor. Zn(2+) serves as cofactor.

The enzyme catalyses RNA(n) + a ribonucleoside 5'-triphosphate = RNA(n+1) + diphosphate. DNA-dependent RNA polymerase catalyzes the transcription of DNA into RNA using the four ribonucleoside triphosphates as substrates. The protein is DNA-directed RNA polymerase subunit beta' of Pseudomonas fluorescens (strain ATCC BAA-477 / NRRL B-23932 / Pf-5).